The following is an 802-amino-acid chain: Exocyst complex component 6 (802 aa).

This sequence belongs to the SEC15 family. In terms of assembly, the exocyst complex is composed of EXOC1, EXOC2, EXOC3, EXOC4, EXOC5, EXOC6, EXOC7 and EXOC8. Interacts with CNTRL. Interacts with RAB11A in a GTP-dependent manner.

The protein localises to the cytoplasm. The protein resides in the perinuclear region. Its subcellular location is the cell projection. It localises to the growth cone. It is found in the midbody. The protein localises to the midbody ring. Component of the exocyst complex involved in the docking of exocytic vesicles with fusion sites on the plasma membrane. Together with RAB11A, RAB3IP, RAB8A, PARD3, PRKCI, ANXA2, CDC42 and DNMBP promotes transcytosis of PODXL to the apical membrane initiation sites (AMIS), apical surface formation and lumenogenesis. In Mus musculus (Mouse), this protein is Exocyst complex component 6 (Exoc6).